The primary structure comprises 324 residues: PTS system glucose-specific EIICBA component (324 aa).

The PTS EIIC type-1 domain maps to 1-63 (HLLNVKIGMT…KWDLATPGRE (63 aa)). 2 consecutive transmembrane segments (helical) span residues 5–25 (VKIG…GVLP) and 28–48 (TAWW…YFGF). A PTS EIIB type-1 domain is found at 78-159 (GDLPYEVLAA…QDIMQGKAPA (82 aa)). Cys100 functions as the Phosphocysteine intermediate; for EIIB activity in the catalytic mechanism. The disordered stretch occupies residues 156-177 (KAPARAEEKPKTAASEAAESET). Low complexity predominate over residues 167–177 (TAASEAAESET). The PTS EIIA type-1 domain maps to 194–298 (DQVFSQKMMG…SIVTPVIFTN (105 aa)). Catalysis depends on His246, which acts as the Tele-phosphohistidine intermediate; for EIIA activity.

The protein resides in the cell membrane. The catalysed reaction is N(pros)-phospho-L-histidyl-[protein] + D-glucose(out) = D-glucose 6-phosphate(in) + L-histidyl-[protein]. Its function is as follows. The phosphoenolpyruvate-dependent sugar phosphotransferase system (sugar PTS), a major carbohydrate active transport system, catalyzes the phosphorylation of incoming sugar substrates concomitantly with their translocation across the cell membrane. This system is involved in glucose transport. The chain is PTS system glucose-specific EIICBA component (ptsG) from Geobacillus stearothermophilus (Bacillus stearothermophilus).